A 370-amino-acid polypeptide reads, in one-letter code: Prolactin-releasing peptide receptor (370 aa).

Residues 1 to 62 lie on the Extracellular side of the membrane; sequence MASSTTRGPR…LQLVHQLKGL (62 aa). 2 N-linked (GlcNAc...) asparagine glycosylation sites follow: Asn27 and Asn36. A helical transmembrane segment spans residues 63 to 83; the sequence is IVLLYSVVVVVGLVGNCLLVL. Residues 84–101 are Cytoplasmic-facing; sequence VIARVRRLHNVTNFLIGN. A helical membrane pass occupies residues 102-122; the sequence is LALSDVLMCTACVPLTLAYAF. Residues 123–126 lie on the Extracellular side of the membrane; the sequence is EPRG. A helical membrane pass occupies residues 127–147; sequence WVFGGGLCHLVFFLQPVTVYV. A disulfide bridge links Cys134 with Cys211. Residues 148–175 are Cytoplasmic-facing; the sequence is SVFTLTTIAVDRYVVLVHPLRRRISLRL. Residues 176 to 196 traverse the membrane as a helical segment; it reads SAYAVLAIWALSAVLALPAAV. Residues 197 to 225 lie on the Extracellular side of the membrane; the sequence is HTYHVELKPHDVRLCEEFWGSQERQRQLY. The helical transmembrane segment at 226–246 threads the bilayer; the sequence is AWGLLLVTYLLPLLVILLSYV. Topologically, residues 247-276 are cytoplasmic; the sequence is RVSVKLRNRVVPGCVTQSQADWDRARRRRT. Residues 277 to 297 traverse the membrane as a helical segment; it reads FCLLVVIVVVFAVCWLPLHVF. At 298–317 the chain is on the extracellular side; sequence NLLRDLDPHAIDPYAFGLVQ. A helical transmembrane segment spans residues 318–338; that stretch reads LLCHWLAMSSACYNPFIYAWL. Over 339–369 the chain is Cytoplasmic; the sequence is HDSFREELRKLLVAWPRKIAPHGQNMTVSVV. The required for interaction with GRIP1, GRIP2 and PICK1 stretch occupies residues 365–370; that stretch reads TVSVVI.

This sequence belongs to the G-protein coupled receptor 1 family. Interacts through its C-terminal region with the PDZ domain-containing proteins GRIP1, GRIP2 and PICK1. Interacts with PDZ domains 4 and 5 of GRIP1 and with the PDZ domain of PICK1. As to expression, only detected in the pituitary gland and in all cell types of pituitary adenomas.

It is found in the cell membrane. Its function is as follows. Receptor for prolactin-releasing peptide (PrRP). Implicated in lactation, regulation of food intake and pain-signal processing. In Homo sapiens (Human), this protein is Prolactin-releasing peptide receptor (PRLHR).